The following is a 117-amino-acid chain: Putative membrane protein insertion efficiency factor (117 aa).

It belongs to the UPF0161 family.

It localises to the cell inner membrane. Could be involved in insertion of integral membrane proteins into the membrane. The sequence is that of Putative membrane protein insertion efficiency factor from Bartonella henselae (strain ATCC 49882 / DSM 28221 / CCUG 30454 / Houston 1) (Rochalimaea henselae).